The chain runs to 364 residues: MVQQLVFSEPRPGKPPRHLADLDADGRASAVAELGLPAFRAKQLAHQYYGRLIADPRQMTDLPAGLRDAIADTMFPILLTAASEVTCDAGQTRKTLWRALDGVTVESVLMRYPHRNTVCISSQAGCGMACPFCATGQGGLSRNLSTAEILEQVRAGAAALRDDFGDRLSNVVFMGMGEPLANYARVVAAVRRIVAAPPQGFGISARSVTVSTVGLAPAIRKLADERLGVTLALSLHAPDDELRDTLVPVNNRWKIAEALDAARYYADVTGRRVSVEYALIRDVNDQPWRADLLGRRLHRALGPLVHVNLIPLNPTPGSQWDASPKPVEREFVRRVRAAGVSCTVRDTRGREISAACGQLAAEGG.

Glu106 acts as the Proton acceptor in catalysis. Positions 112 to 351 constitute a Radical SAM core domain; that stretch reads YPHRNTVCIS…CTVRDTRGRE (240 aa). An intrachain disulfide couples Cys119 to Cys356. [4Fe-4S] cluster contacts are provided by Cys126, Cys130, and Cys133. Residues 177-178, Ser211, 234-236, and Asn313 contribute to the S-adenosyl-L-methionine site; these read GE and SLH. Cys356 (S-methylcysteine intermediate) is an active-site residue.

This sequence belongs to the radical SAM superfamily. RlmN family. [4Fe-4S] cluster serves as cofactor.

It is found in the cytoplasm. The catalysed reaction is adenosine(2503) in 23S rRNA + 2 reduced [2Fe-2S]-[ferredoxin] + 2 S-adenosyl-L-methionine = 2-methyladenosine(2503) in 23S rRNA + 5'-deoxyadenosine + L-methionine + 2 oxidized [2Fe-2S]-[ferredoxin] + S-adenosyl-L-homocysteine. It catalyses the reaction adenosine(37) in tRNA + 2 reduced [2Fe-2S]-[ferredoxin] + 2 S-adenosyl-L-methionine = 2-methyladenosine(37) in tRNA + 5'-deoxyadenosine + L-methionine + 2 oxidized [2Fe-2S]-[ferredoxin] + S-adenosyl-L-homocysteine. In terms of biological role, specifically methylates position 2 of adenine 2503 in 23S rRNA and position 2 of adenine 37 in tRNAs. This chain is Probable dual-specificity RNA methyltransferase RlmN, found in Mycolicibacterium paratuberculosis (strain ATCC BAA-968 / K-10) (Mycobacterium paratuberculosis).